The sequence spans 76 residues: Exodeoxyribonuclease 7 small subunit (76 aa).

The protein belongs to the XseB family. In terms of assembly, heterooligomer composed of large and small subunits.

The protein localises to the cytoplasm. The enzyme catalyses Exonucleolytic cleavage in either 5'- to 3'- or 3'- to 5'-direction to yield nucleoside 5'-phosphates.. Its function is as follows. Bidirectionally degrades single-stranded DNA into large acid-insoluble oligonucleotides, which are then degraded further into small acid-soluble oligonucleotides. This chain is Exodeoxyribonuclease 7 small subunit, found in Gluconacetobacter diazotrophicus (strain ATCC 49037 / DSM 5601 / CCUG 37298 / CIP 103539 / LMG 7603 / PAl5).